Here is a 434-residue protein sequence, read N- to C-terminus: E3 ubiquitin-protein transferase MAEA (434 aa).

The extracellular and involved in cell to cell contact stretch occupies residues 1 to 124 (MAVQESAAQL…AAASVWKRKR (124 aa)). A Phosphothreonine modification is found at threonine 28. Residues 121 to 153 (KRKRMDRMMVEHLLRCGYYNTAVKLARQSGIED) enclose the LisH domain. A CTLH domain is found at 159–254 (MFLTAKEVEE…ELIRQNKRLD (96 aa)). The interval 190–222 (RKMKGRQSEHDAKTGRKSRVASGSPKESEDLGM) is disordered. The RING-Gid-type zinc finger occupies 352 to 419 (CPVCSRSLNK…QDDKVVCPRT (68 aa)).

Identified in the CTLH complex that contains GID4, RANBP9 and/or RANBP10, MKLN1, MAEA, RMND5A (or alternatively its paralog RMND5B), GID8, ARMC8, WDR26 and YPEL5. Within this complex, MAEA, RMND5A (or alternatively its paralog RMND5B), GID8, WDR26, and RANBP9 and/or RANBP10 form the catalytic core, while GID4, MKLN1, ARMC8 and YPEL5 have ancillary roles. Interacts with F-actin. In terms of processing, autoubiquitinated as component of the CTLH E3 ubiquitin-protein ligase complex (in vitro).

The protein localises to the cytoplasm. The protein resides in the nucleus. Its subcellular location is the nucleoplasm. It is found in the nucleus matrix. It localises to the cell membrane. The protein localises to the cytoskeleton. The catalysed reaction is S-ubiquitinyl-[E2 ubiquitin-conjugating enzyme]-L-cysteine + [acceptor protein]-L-lysine = [E2 ubiquitin-conjugating enzyme]-L-cysteine + N(6)-ubiquitinyl-[acceptor protein]-L-lysine.. Its function is as follows. Core component of the CTLH E3 ubiquitin-protein ligase complex that selectively accepts ubiquitin from UBE2H and mediates ubiquitination and subsequent proteasomal degradation of the transcription factor HBP1. MAEA and RMND5A are both required for catalytic activity of the CTLH E3 ubiquitin-protein ligase complex. MAEA is required for normal cell proliferation. The CTLH E3 ubiquitin-protein ligase complex is not required for the degradation of enzymes involved in gluconeogenesis, such as FBP1. Plays a role in erythroblast enucleation during erythrocyte maturation and in the development of mature macrophages. Mediates the attachment of erythroid cell to mature macrophages; this MAEA-mediated contact inhibits erythroid cell apoptosis. Participates in erythroblastic island formation, which is the functional unit of definitive erythropoiesis. Associates with F-actin to regulate actin distribution in erythroblasts and macrophages. May contribute to nuclear architecture and cells division events. The polypeptide is E3 ubiquitin-protein transferase MAEA (MAEA) (Bos taurus (Bovine)).